A 289-amino-acid polypeptide reads, in one-letter code: MTSKIFKFFLTWWLTQQVTGLAVPFMLDMAPNAFDDQYESCVEDMEKKAPQLLQEDFNMNEELKLEWEKAEINWKEIKNSTSYPAGFHDFHGTALVAYTGNLAIDFNRAVRDFKKSPDNFHYKAFHYYLTRAVQLLNDQGCSLVYRGTKVMFEYTGKGSVRFGQFSSSSLTKRVALSSNFFSNHGTLFIIRTCLGVNIKEFSSFPREEEVLIPGYEVYHKVTAQNDNGYNEIFLDSPERKKSNFNCFYNGSAQTVNIDFSISGSRESCVSLFLVVLLGLLVQQLTLAEL.

The signal sequence occupies residues 1–20 (MTSKIFKFFLTWWLTQQVTG). Intrachain disulfides connect Cys-41–Cys-246 and Cys-141–Cys-193. Residues 61-241 (EELKLEWEKA…IFLDSPERKK (181 aa)) enclose the TR mART core domain. N-linked (GlcNAc...) asparagine glycosylation is present at Asn-79. Positions 98, 146, and 164 each coordinate NAD(+). Arg-146 is a catalytic residue. Ser-167 is a catalytic residue. NAD(+) is bound at residue Ser-202. Residue Glu-209 is part of the active site. A glycan (N-linked (GlcNAc...) asparagine) is linked at Asn-249. Ser-260 carries GPI-anchor amidated serine lipidation. Positions 261–289 (ISGSRESCVSLFLVVLLGLLVQQLTLAEL) are cleaved as a propeptide — removed in mature form.

Belongs to the Arg-specific ADP-ribosyltransferase family. Expressed in spleen, intestine and thymus.

It is found in the cell membrane. The enzyme catalyses L-arginyl-[protein] + NAD(+) = N(omega)-(ADP-D-ribosyl)-L-arginyl-[protein] + nicotinamide + H(+). It catalyses the reaction NAD(+) + H2O = ADP-D-ribose + nicotinamide + H(+). In terms of biological role, has both NAD(+) glycohydrolase and ADP-ribosyltransferase activity. The polypeptide is T-cell ecto-ADP-ribosyltransferase 2 (Art2b) (Mus musculus (Mouse)).